A 421-amino-acid polypeptide reads, in one-letter code: UPF0415 protein C7orf25 (421 aa).

The protein belongs to the UPF0415 family.

This Homo sapiens (Human) protein is UPF0415 protein C7orf25 (C7orf25).